The sequence spans 270 residues: Cytochrome c oxidase subunit 3 (270 aa).

7 helical membrane-spanning segments follow: residues 22 to 42 (PWPI…GLTM), 46 to 66 (IGEM…GVLW), 88 to 108 (INIG…ALFW), 128 to 148 (VGIT…ILLA), 168 to 188 (SLSG…CQYI), 205 to 225 (VFFA…IMLA), and 248 to 268 (IIYL…FYWW).

The protein belongs to the cytochrome c oxidase subunit 3 family. Component of the cytochrome c oxidase (complex IV, CIV), a multisubunit enzyme composed of a catalytic core of 3 subunits and several supernumerary subunits. The complex exists as a monomer or a dimer and forms supercomplexes (SCs) in the inner mitochondrial membrane with ubiquinol-cytochrome c oxidoreductase (cytochrome b-c1 complex, complex III, CIII).

Its subcellular location is the mitochondrion inner membrane. The enzyme catalyses 4 Fe(II)-[cytochrome c] + O2 + 8 H(+)(in) = 4 Fe(III)-[cytochrome c] + 2 H2O + 4 H(+)(out). In terms of biological role, component of the cytochrome c oxidase, the last enzyme in the mitochondrial electron transport chain which drives oxidative phosphorylation. The respiratory chain contains 3 multisubunit complexes succinate dehydrogenase (complex II, CII), ubiquinol-cytochrome c oxidoreductase (cytochrome b-c1 complex, complex III, CIII) and cytochrome c oxidase (complex IV, CIV), that cooperate to transfer electrons derived from NADH and succinate to molecular oxygen, creating an electrochemical gradient over the inner membrane that drives transmembrane transport and the ATP synthase. Cytochrome c oxidase is the component of the respiratory chain that catalyzes the reduction of oxygen to water. Electrons originating from reduced cytochrome c in the intermembrane space (IMS) are transferred via the dinuclear copper A center (CU(A)) of subunit 2 and heme A of subunit 1 to the active site in subunit 1, a binuclear center (BNC) formed by heme A3 and copper B (CU(B)). The BNC reduces molecular oxygen to 2 water molecules using 4 electrons from cytochrome c in the IMS and 4 protons from the mitochondrial matrix. The sequence is that of Cytochrome c oxidase subunit 3 (COX3) from Vanderwaltozyma polyspora (strain ATCC 22028 / DSM 70294 / BCRC 21397 / CBS 2163 / NBRC 10782 / NRRL Y-8283 / UCD 57-17) (Kluyveromyces polysporus).